A 61-amino-acid polypeptide reads, in one-letter code: Large ribosomal subunit protein uL30 (61 aa).

This sequence belongs to the universal ribosomal protein uL30 family. Part of the 50S ribosomal subunit.

This Frankia alni (strain DSM 45986 / CECT 9034 / ACN14a) protein is Large ribosomal subunit protein uL30.